Here is a 300-residue protein sequence, read N- to C-terminus: Nucleotide-binding protein Dshi_0209 (300 aa).

An ATP-binding site is contributed by 20–27; sequence GPSGAGRT. 67 to 70 is a GTP binding site; that stretch reads DART.

This sequence belongs to the RapZ-like family.

Functionally, displays ATPase and GTPase activities. This is Nucleotide-binding protein Dshi_0209 from Dinoroseobacter shibae (strain DSM 16493 / NCIMB 14021 / DFL 12).